The sequence spans 190 residues: Segregation and condensation protein B (190 aa).

It belongs to the ScpB family. In terms of assembly, homodimer. Homodimerization may be required to stabilize the binding of ScpA to the Smc head domains. Component of a cohesin-like complex composed of ScpA, ScpB and the Smc homodimer, in which ScpA and ScpB bind to the head domain of Smc. The presence of the three proteins is required for the association of the complex with DNA.

It is found in the cytoplasm. Participates in chromosomal partition during cell division. May act via the formation of a condensin-like complex containing Smc and ScpA that pull DNA away from mid-cell into both cell halves. The protein is Segregation and condensation protein B of Bacillus cereus (strain B4264).